We begin with the raw amino-acid sequence, 241 residues long: MPKYEIMTILDPKAEMAIIDNLLKTVFGDNSTEKLRKLETTNLAYSIRKSKIAQYFLVDLNAPTNLIEEFVRRANITREIWRYLIVNLDSEKGLNKKPKIRERNRKYTLRRDRFDKPNFRGNPKSRFDQQDQQATKNQQNFQQNQQNQASQYRENSRQNQDDFQQVSSNQQNFGQNQQNQSGYHRENNRHNQENMHQNNKNHQNQTSQTQRNRRQYQPIKNPKFNQKEKENYNNKKPQSSN.

Basic residues predominate over residues 97 to 108; sequence KPKIRERNRKYT. Residues 97 to 241 are disordered; that stretch reads KPKIRERNRK…YNNKKPQSSN (145 aa). Basic and acidic residues predominate over residues 109-118; the sequence is LRRDRFDKPN. Low complexity-rich tracts occupy residues 130-151 and 161-182; these read QDQQ…QASQ and DDFQ…NQSG. A compositionally biased stretch (basic and acidic residues) spans 183–193; it reads YHRENNRHNQE. A compositionally biased stretch (low complexity) spans 194 to 210; sequence NMHQNNKNHQNQTSQTQ.

The protein belongs to the bacterial ribosomal protein bS6 family.

Binds together with bS18 to 16S ribosomal RNA. The sequence is that of Small ribosomal subunit protein bS6 from Mesomycoplasma hyopneumoniae (strain J / ATCC 25934 / NCTC 10110) (Mycoplasma hyopneumoniae).